The chain runs to 396 residues: Putative peptide chain release factor 1, mitochondrial (396 aa).

Gln-270 carries the N5-methylglutamine modification.

The protein belongs to the prokaryotic/mitochondrial release factor family. Methylation of glutamine in the GGQ triplet is conserved from bacteria to mammals.

Its subcellular location is the mitochondrion. In Schizosaccharomyces pombe (strain 972 / ATCC 24843) (Fission yeast), this protein is Putative peptide chain release factor 1, mitochondrial.